A 206-amino-acid chain; its full sequence is Large ribosomal subunit protein uL4 (206 aa).

Residues 47 to 79 (GTKGQKNRSAVRGGGAKPWAQKGSGRARAGTSR) are disordered. The span at 69 to 79 (GSGRARAGTSR) shows a compositional bias: low complexity.

This sequence belongs to the universal ribosomal protein uL4 family. In terms of assembly, part of the 50S ribosomal subunit.

One of the primary rRNA binding proteins, this protein initially binds near the 5'-end of the 23S rRNA. It is important during the early stages of 50S assembly. It makes multiple contacts with different domains of the 23S rRNA in the assembled 50S subunit and ribosome. Its function is as follows. Forms part of the polypeptide exit tunnel. The chain is Large ribosomal subunit protein uL4 from Hydrogenovibrio crunogenus (strain DSM 25203 / XCL-2) (Thiomicrospira crunogena).